The primary structure comprises 340 residues: Ketol-acid reductoisomerase (NADP(+)) (340 aa).

The KARI N-terminal Rossmann domain maps to 2-182 (AELYYDNQAD…GCTRAGVLRT (181 aa)). Residues 25–28 (FGSQ), serine 51, serine 53, and 83–86 (DIGQ) each bind NADP(+). Histidine 108 is a catalytic residue. Residue glycine 134 participates in NADP(+) binding. Residues 183–328 (TFAEETETDL…RELRRMMPFV (146 aa)) enclose the KARI C-terminal knotted domain. Aspartate 191, glutamate 195, glutamate 227, and glutamate 231 together coordinate Mg(2+). Serine 252 is a binding site for substrate.

This sequence belongs to the ketol-acid reductoisomerase family. It depends on Mg(2+) as a cofactor.

The catalysed reaction is (2R)-2,3-dihydroxy-3-methylbutanoate + NADP(+) = (2S)-2-acetolactate + NADPH + H(+). It carries out the reaction (2R,3R)-2,3-dihydroxy-3-methylpentanoate + NADP(+) = (S)-2-ethyl-2-hydroxy-3-oxobutanoate + NADPH + H(+). It functions in the pathway amino-acid biosynthesis; L-isoleucine biosynthesis; L-isoleucine from 2-oxobutanoate: step 2/4. The protein operates within amino-acid biosynthesis; L-valine biosynthesis; L-valine from pyruvate: step 2/4. Its function is as follows. Involved in the biosynthesis of branched-chain amino acids (BCAA). Catalyzes an alkyl-migration followed by a ketol-acid reduction of (S)-2-acetolactate (S2AL) to yield (R)-2,3-dihydroxy-isovalerate. In the isomerase reaction, S2AL is rearranged via a Mg-dependent methyl migration to produce 3-hydroxy-3-methyl-2-ketobutyrate (HMKB). In the reductase reaction, this 2-ketoacid undergoes a metal-dependent reduction by NADPH to yield (R)-2,3-dihydroxy-isovalerate. The polypeptide is Ketol-acid reductoisomerase (NADP(+)) (Chloroflexus aurantiacus (strain ATCC 29366 / DSM 635 / J-10-fl)).